The sequence spans 423 residues: Tubulin beta-2 chain (423 aa).

GTP contacts are provided by Glu-44, Ser-113, Gly-117, Thr-118, Gly-119, Asn-179, and Asn-201. Residue Glu-44 participates in Mg(2+) binding. The interval 394-423 is disordered; that stretch reads VSEYQQYQDATAEEEGEYDEDEDDEGGDYA. A compositionally biased stretch (acidic residues) spans 404 to 423; the sequence is TAEEEGEYDEDEDDEGGDYA.

It belongs to the tubulin family. As to quaternary structure, dimer of alpha and beta chains. A typical microtubule is a hollow water-filled tube with an outer diameter of 25 nm and an inner diameter of 15 nM. Alpha-beta heterodimers associate head-to-tail to form protofilaments running lengthwise along the microtubule wall with the beta-tubulin subunit facing the microtubule plus end conferring a structural polarity. Microtubules usually have 13 protofilaments but different protofilament numbers can be found in some organisms and specialized cells. It depends on Mg(2+) as a cofactor.

It is found in the cytoplasm. The protein resides in the cytoskeleton. Tubulin is the major constituent of microtubules, a cylinder consisting of laterally associated linear protofilaments composed of alpha- and beta-tubulin heterodimers. Microtubules grow by the addition of GTP-tubulin dimers to the microtubule end, where a stabilizing cap forms. Below the cap, tubulin dimers are in GDP-bound state, owing to GTPase activity of alpha-tubulin. The polypeptide is Tubulin beta-2 chain (TUBB2) (Oomycete-like sp. (strain MacKay2000)).